A 428-amino-acid chain; its full sequence is 3-phosphoshikimate 1-carboxyvinyltransferase (428 aa).

3-phosphoshikimate is bound by residues K23, S24, and R28. K23 contributes to the phosphoenolpyruvate binding site. Residues G97 and R125 each coordinate phosphoenolpyruvate. 3-phosphoshikimate contacts are provided by S170, S171, Q172, S198, D314, N337, and K341. Q172 provides a ligand contact to phosphoenolpyruvate. The active-site Proton acceptor is D314. Phosphoenolpyruvate is bound by residues R345, R387, and K412.

The protein belongs to the EPSP synthase family. Monomer.

The protein localises to the cytoplasm. It carries out the reaction 3-phosphoshikimate + phosphoenolpyruvate = 5-O-(1-carboxyvinyl)-3-phosphoshikimate + phosphate. It functions in the pathway metabolic intermediate biosynthesis; chorismate biosynthesis; chorismate from D-erythrose 4-phosphate and phosphoenolpyruvate: step 6/7. Catalyzes the transfer of the enolpyruvyl moiety of phosphoenolpyruvate (PEP) to the 5-hydroxyl of shikimate-3-phosphate (S3P) to produce enolpyruvyl shikimate-3-phosphate and inorganic phosphate. This is 3-phosphoshikimate 1-carboxyvinyltransferase from Hamiltonella defensa subsp. Acyrthosiphon pisum (strain 5AT).